A 304-amino-acid chain; its full sequence is Porphobilinogen deaminase (304 aa).

Cys-240 carries the post-translational modification S-(dipyrrolylmethanemethyl)cysteine.

Belongs to the HMBS family. Monomer. Dipyrromethane is required as a cofactor.

The catalysed reaction is 4 porphobilinogen + H2O = hydroxymethylbilane + 4 NH4(+). Its pathway is porphyrin-containing compound metabolism; protoporphyrin-IX biosynthesis; coproporphyrinogen-III from 5-aminolevulinate: step 2/4. In terms of biological role, tetrapolymerization of the monopyrrole PBG into the hydroxymethylbilane pre-uroporphyrinogen in several discrete steps. The sequence is that of Porphobilinogen deaminase from Xanthomonas axonopodis pv. citri (strain 306).